The primary structure comprises 323 residues: Syntaxin-42 (323 aa).

Residues 1-302 (MATRNRTTVY…QREGAMVKCA (302 aa)) are Cytoplasmic-facing. The t-SNARE coiled-coil homology domain maps to 227–289 (QHVSAERERE…EEGYKQLQKA (63 aa)). The helical; Anchor for type IV membrane protein transmembrane segment at 303–323 (TILLVLCLIMIVLLILKNILF) threads the bilayer.

Belongs to the syntaxin family. In terms of assembly, interacts with VTI12 and SYP61 to form a t-SNARE complex and with VPS45. Expressed at low levels in roots, stems, flowers and leaves.

It is found in the golgi apparatus. The protein localises to the trans-Golgi network membrane. In terms of biological role, contributes to the regulation of secretory and vacuolar transport pathways in the post-Golgi network, and to the maintenance of the Golgi apparatus and trans-Golgi network (TGN) morphologies. Vesicle trafficking protein that functions in the secretory pathway and mediates liposome fusion. Required for extracellular resistance responses to a fungal pathogen. Also involved in the protection of chloroplasts from salicylic acid-dependent biotic stress. In Arabidopsis thaliana (Mouse-ear cress), this protein is Syntaxin-42.